A 143-amino-acid polypeptide reads, in one-letter code: Large ribosomal subunit protein uL13 (143 aa).

The protein belongs to the universal ribosomal protein uL13 family. In terms of assembly, part of the 50S ribosomal subunit.

In terms of biological role, this protein is one of the early assembly proteins of the 50S ribosomal subunit, although it is not seen to bind rRNA by itself. It is important during the early stages of 50S assembly. The sequence is that of Large ribosomal subunit protein uL13 from Neisseria meningitidis serogroup C (strain 053442).